Consider the following 276-residue polypeptide: 4-deoxy-L-threo-5-hexosulose-uronate ketol-isomerase (276 aa).

Positions 194, 196, 201, and 243 each coordinate Zn(2+).

Belongs to the KduI family. Zn(2+) is required as a cofactor.

It carries out the reaction 5-dehydro-4-deoxy-D-glucuronate = 3-deoxy-D-glycero-2,5-hexodiulosonate. Its pathway is glycan metabolism; pectin degradation; 2-dehydro-3-deoxy-D-gluconate from pectin: step 4/5. In terms of biological role, catalyzes the isomerization of 5-dehydro-4-deoxy-D-glucuronate to 3-deoxy-D-glycero-2,5-hexodiulosonate. The polypeptide is 4-deoxy-L-threo-5-hexosulose-uronate ketol-isomerase (Caldicellulosiruptor bescii (strain ATCC BAA-1888 / DSM 6725 / KCTC 15123 / Z-1320) (Anaerocellum thermophilum)).